The chain runs to 165 residues: Choriogonadotropin subunit beta 3 (165 aa).

The signal sequence occupies residues 1 to 20; it reads MEMFQGLLLLLLLSMGGTWA. Cystine bridges form between Cys29/Cys77, Cys43/Cys92, Cys46/Cys130, Cys54/Cys108, Cys58/Cys110, and Cys113/Cys120. N-linked (GlcNAc...) asparagine glycosylation is found at Asn33 and Asn50. Residues 131–165 are disordered; the sequence is DDPRFQDSSSSKAPPPSLPSPSRLPGPSDTPILPQ. Residues Ser141, Ser147, Ser152, and Ser158 are each glycosylated (O-linked (GalNAc...) serine). Residues 143 to 154 show a composition bias toward pro residues; the sequence is APPPSLPSPSRL.

The protein belongs to the glycoprotein hormones subunit beta family. As to quaternary structure, heterodimer of a common alpha chain identical in LH, FSH, TSH and HCG and a unique beta chain distinct in each of the hormones. High expression in the placenta throughout pregnancy.

Its subcellular location is the secreted. Beta subunit of the human chorionic gonadotropin (hCG). hCG is a complex glycoprotein composed of two glycosylated subunits alpha and beta which are non-covalently associated. The alpha subunit is identical to those in the pituitary gonadotropin hormones (LH, FSH and TSH). The beta subunits are distinct in each of the hormones and confer receptor and biological specificity. Has an essential role in pregnancy and maternal adaptation. Stimulates the ovaries to synthesize the steroids that are essential for the maintenance of pregnancy. The polypeptide is Choriogonadotropin subunit beta 3 (CGB3) (Homo sapiens (Human)).